Consider the following 410-residue polypeptide: E3 ubiquitin-protein ligase PRT1 (410 aa).

2 consecutive RING-type zinc fingers follow at residues 26–66 (CCVC…PICR) and 192–232 (CSAC…QECN). Residues 306 to 370 (HFGAGCDSCG…RLELARSPQV (65 aa)) form a ZZ-type zinc finger. Cysteine 311, cysteine 314, cysteine 326, cysteine 329, cysteine 338, cysteine 341, histidine 356, and histidine 360 together coordinate Zn(2+). Residues 385 to 410 (ISNEGMDTDEGEEGPPGSSNESSSTE) are disordered. Low complexity predominate over residues 399–410 (PPGSSNESSSTE).

Its subcellular location is the cytoplasm. The enzyme catalyses S-ubiquitinyl-[E2 ubiquitin-conjugating enzyme]-L-cysteine + [acceptor protein]-L-lysine = [E2 ubiquitin-conjugating enzyme]-L-cysteine + N(6)-ubiquitinyl-[acceptor protein]-L-lysine.. The protein operates within protein modification; protein ubiquitination. Its function is as follows. E3 ubiquitin-protein ligase that mediates ubiquitination and subsequent proteasomal degradation of target proteins. Functions in the N-end rule pathway of protein degradation, where it specifically recognizes and ubiquitinates proteins with a N-terminal bulky aromatic amino acid (Phe). Does not act on aliphatic hydrophobic and basic N-terminal residues (Arg or Leu) containing proteins. This Arabidopsis thaliana (Mouse-ear cress) protein is E3 ubiquitin-protein ligase PRT1 (PRT1).